Reading from the N-terminus, the 259-residue chain is Adenylosuccinate synthetase (259 aa).

Residues 3–9 (GDEGKGK) and 31–33 (GHT) contribute to the GTP site. Asp4 (proton acceptor) is an active-site residue. Mg(2+)-binding residues include Asp4 and Gly31. 4 to 7 (DEGK) is an IMP binding site. His32 serves as the catalytic Proton donor. Residues Thr120, Arg134, Gln215, and Thr230 each coordinate IMP.

Belongs to the adenylosuccinate synthetase family. In terms of assembly, homodimer. Mg(2+) serves as cofactor.

Its subcellular location is the cytoplasm. The enzyme catalyses IMP + L-aspartate + GTP = N(6)-(1,2-dicarboxyethyl)-AMP + GDP + phosphate + 2 H(+). The protein operates within purine metabolism; AMP biosynthesis via de novo pathway; AMP from IMP: step 1/2. In terms of biological role, plays an important role in the de novo pathway of purine nucleotide biosynthesis. Catalyzes the first committed step in the biosynthesis of AMP from IMP. This chain is Adenylosuccinate synthetase, found in Aggregatibacter actinomycetemcomitans (Actinobacillus actinomycetemcomitans).